The following is a 483-amino-acid chain: Glutamyl-tRNA(Gln) amidotransferase subunit A (483 aa).

Residues K77 and S152 each act as charge relay system in the active site. The active-site Acyl-ester intermediate is S176.

The protein belongs to the amidase family. GatA subfamily. Heterotrimer of A, B and C subunits.

The enzyme catalyses L-glutamyl-tRNA(Gln) + L-glutamine + ATP + H2O = L-glutaminyl-tRNA(Gln) + L-glutamate + ADP + phosphate + H(+). Allows the formation of correctly charged Gln-tRNA(Gln) through the transamidation of misacylated Glu-tRNA(Gln) in organisms which lack glutaminyl-tRNA synthetase. The reaction takes place in the presence of glutamine and ATP through an activated gamma-phospho-Glu-tRNA(Gln). This chain is Glutamyl-tRNA(Gln) amidotransferase subunit A, found in Listeria welshimeri serovar 6b (strain ATCC 35897 / DSM 20650 / CCUG 15529 / CIP 8149 / NCTC 11857 / SLCC 5334 / V8).